Reading from the N-terminus, the 437-residue chain is Citrate synthase (437 aa).

Catalysis depends on residues His316 and Asp372.

Belongs to the citrate synthase family. In terms of assembly, homohexamer.

The catalysed reaction is oxaloacetate + acetyl-CoA + H2O = citrate + CoA + H(+). It functions in the pathway carbohydrate metabolism; tricarboxylic acid cycle; isocitrate from oxaloacetate: step 1/2. Its activity is regulated as follows. Weakly inhibited by ATP (apparent Ki = 10 mm). The chain is Citrate synthase (gltA) from Corynebacterium glutamicum (strain ATCC 13032 / DSM 20300 / JCM 1318 / BCRC 11384 / CCUG 27702 / LMG 3730 / NBRC 12168 / NCIMB 10025 / NRRL B-2784 / 534).